A 225-amino-acid polypeptide reads, in one-letter code: Glutathione S-transferase U3 (225 aa).

In terms of domain architecture, GST N-terminal spans 6-86 (EGVKLIGSWA…YIDQTWTNNP (81 aa)). Glutathione is bound by residues 16-17 (SP), 43-44 (VK), 57-58 (KV), and 70-71 (ES). Residues 91-218 (SPYDKAMARF…EKHIEHMMKI (128 aa)) form the GST C-terminal domain. A Phosphothreonine modification is found at T152.

It belongs to the GST superfamily. Tau family.

The protein resides in the cytoplasm. It is found in the cytosol. The enzyme catalyses RX + glutathione = an S-substituted glutathione + a halide anion + H(+). May be involved in the conjugation of reduced glutathione to a wide number of exogenous and endogenous hydrophobic electrophiles and have a detoxification role against certain herbicides. The sequence is that of Glutathione S-transferase U3 (GSTU3) from Arabidopsis thaliana (Mouse-ear cress).